The primary structure comprises 369 residues: Glutamate 5-kinase (369 aa).

ATP is bound at residue K9. Substrate is bound by residues S49, D136, and N148. ATP-binding positions include 168 to 169 (TD) and 210 to 216 (TGGMLTK). A PUA domain is found at 275 to 355 (QGSIWVDKGA…KGVLIYRDDW (81 aa)).

This sequence belongs to the glutamate 5-kinase family.

It is found in the cytoplasm. It catalyses the reaction L-glutamate + ATP = L-glutamyl 5-phosphate + ADP. The protein operates within amino-acid biosynthesis; L-proline biosynthesis; L-glutamate 5-semialdehyde from L-glutamate: step 1/2. Its function is as follows. Catalyzes the transfer of a phosphate group to glutamate to form L-glutamate 5-phosphate. The sequence is that of Glutamate 5-kinase from Streptococcus pneumoniae serotype 2 (strain D39 / NCTC 7466).